A 385-amino-acid chain; its full sequence is S-adenosylmethionine synthase (385 aa).

Histidine 15 serves as a coordination point for ATP. Aspartate 17 contacts Mg(2+). Residue glutamate 43 participates in K(+) binding. The L-methionine site is built by glutamate 56 and glutamine 99. Positions 99–109 (QSPEIAQGVDE) are flexible loop. Residues 164-166 (DAK), 230-231 (RF), aspartate 239, 245-246 (RK), alanine 262, and lysine 266 each bind ATP. Aspartate 239 is an L-methionine binding site. Lysine 270 is a binding site for L-methionine.

This sequence belongs to the AdoMet synthase family. As to quaternary structure, homotetramer; dimer of dimers. The cofactor is Mg(2+). K(+) serves as cofactor.

The protein resides in the cytoplasm. The catalysed reaction is L-methionine + ATP + H2O = S-adenosyl-L-methionine + phosphate + diphosphate. It functions in the pathway amino-acid biosynthesis; S-adenosyl-L-methionine biosynthesis; S-adenosyl-L-methionine from L-methionine: step 1/1. Its function is as follows. Catalyzes the formation of S-adenosylmethionine (AdoMet) from methionine and ATP. The overall synthetic reaction is composed of two sequential steps, AdoMet formation and the subsequent tripolyphosphate hydrolysis which occurs prior to release of AdoMet from the enzyme. The chain is S-adenosylmethionine synthase from Hydrogenovibrio crunogenus (strain DSM 25203 / XCL-2) (Thiomicrospira crunogena).